The primary structure comprises 429 residues: 3-phosphoshikimate 1-carboxyvinyltransferase (429 aa).

K11, S12, and R16 together coordinate 3-phosphoshikimate. Phosphoenolpyruvate is bound at residue K11. 2 residues coordinate phosphoenolpyruvate: G82 and R110. S155, Q157, D302, and K329 together coordinate 3-phosphoshikimate. Q157 is a phosphoenolpyruvate binding site. The active-site Proton acceptor is D302. The phosphoenolpyruvate site is built by R333 and R385.

Belongs to the EPSP synthase family. Monomer.

It localises to the cytoplasm. The enzyme catalyses 3-phosphoshikimate + phosphoenolpyruvate = 5-O-(1-carboxyvinyl)-3-phosphoshikimate + phosphate. It participates in metabolic intermediate biosynthesis; chorismate biosynthesis; chorismate from D-erythrose 4-phosphate and phosphoenolpyruvate: step 6/7. Its function is as follows. Catalyzes the transfer of the enolpyruvyl moiety of phosphoenolpyruvate (PEP) to the 5-hydroxyl of shikimate-3-phosphate (S3P) to produce enolpyruvyl shikimate-3-phosphate and inorganic phosphate. The polypeptide is 3-phosphoshikimate 1-carboxyvinyltransferase (Helicobacter pylori (strain HPAG1)).